The chain runs to 172 residues: Large ribosomal subunit protein uL10 (172 aa).

The protein belongs to the universal ribosomal protein uL10 family. In terms of assembly, part of the ribosomal stalk of the 50S ribosomal subunit. The N-terminus interacts with L11 and the large rRNA to form the base of the stalk. The C-terminus forms an elongated spine to which L12 dimers bind in a sequential fashion forming a multimeric L10(L12)X complex.

Its function is as follows. Forms part of the ribosomal stalk, playing a central role in the interaction of the ribosome with GTP-bound translation factors. In Idiomarina loihiensis (strain ATCC BAA-735 / DSM 15497 / L2-TR), this protein is Large ribosomal subunit protein uL10.